A 163-amino-acid chain; its full sequence is ATP synthase subunit b (163 aa).

A helical transmembrane segment spans residues 10 to 29 (VFMQMFHFLLMLVVLRLFAY).

It belongs to the ATPase B chain family. As to quaternary structure, F-type ATPases have 2 components, F(1) - the catalytic core - and F(0) - the membrane proton channel. F(1) has five subunits: alpha(3), beta(3), gamma(1), delta(1), epsilon(1). F(0) has three main subunits: a(1), b(2) and c(10-14). The alpha and beta chains form an alternating ring which encloses part of the gamma chain. F(1) is attached to F(0) by a central stalk formed by the gamma and epsilon chains, while a peripheral stalk is formed by the delta and b chains.

It localises to the cell membrane. In terms of biological role, f(1)F(0) ATP synthase produces ATP from ADP in the presence of a proton or sodium gradient. F-type ATPases consist of two structural domains, F(1) containing the extramembraneous catalytic core and F(0) containing the membrane proton channel, linked together by a central stalk and a peripheral stalk. During catalysis, ATP synthesis in the catalytic domain of F(1) is coupled via a rotary mechanism of the central stalk subunits to proton translocation. Functionally, component of the F(0) channel, it forms part of the peripheral stalk, linking F(1) to F(0). This chain is ATP synthase subunit b, found in Desulforudis audaxviator (strain MP104C).